The following is a 210-amino-acid chain: 2-dehydro-3-deoxy-phosphogluconate aldolase (210 aa).

Catalysis depends on Glu-41, which acts as the Proton acceptor. Pyruvate-binding residues include Arg-45, Thr-69, and Lys-129. Lys-129 functions as the Schiff-base intermediate with substrate in the catalytic mechanism.

It belongs to the KHG/KDPG aldolase family. As to quaternary structure, homotrimer.

It localises to the cytoplasm. The enzyme catalyses 2-dehydro-3-deoxy-6-phospho-D-gluconate = D-glyceraldehyde 3-phosphate + pyruvate. Its pathway is carbohydrate acid metabolism; 2-dehydro-3-deoxy-D-gluconate degradation; D-glyceraldehyde 3-phosphate and pyruvate from 2-dehydro-3-deoxy-D-gluconate: step 2/2. Its function is as follows. Catalyzes the reversible, stereospecific retro-aldol cleavage of 2-keto-3-deoxy-6-phosphogluconate (KDPG) to pyruvate and D-glyceraldehyde-3-phosphate. In Treponema pallidum (strain Nichols), this protein is 2-dehydro-3-deoxy-phosphogluconate aldolase (eda).